Here is a 299-residue protein sequence, read N- to C-terminus: UTP--glucose-1-phosphate uridylyltransferase (299 aa).

This sequence belongs to the UDPGP type 2 family.

The catalysed reaction is alpha-D-glucose 1-phosphate + UTP + H(+) = UDP-alpha-D-glucose + diphosphate. It participates in carbohydrate metabolism; nucleotide-sugar metabolism. It functions in the pathway capsule biogenesis; capsule polysaccharide biosynthesis. The polypeptide is UTP--glucose-1-phosphate uridylyltransferase (cap4C) (Streptococcus pneumoniae serotype 4 (strain ATCC BAA-334 / TIGR4)).